Here is a 284-residue protein sequence, read N- to C-terminus: NADPH-dependent 7-cyano-7-deazaguanine reductase (284 aa).

Residue 91–93 (IES) coordinates substrate. 93–94 (SK) contributes to the NADPH binding site. The active-site Thioimide intermediate is the Cys-192. Residue Asp-199 is the Proton donor of the active site. 231–232 (HE) contacts substrate. 260 to 261 (RG) is a binding site for NADPH.

The protein belongs to the GTP cyclohydrolase I family. QueF type 2 subfamily. In terms of assembly, homodimer.

It localises to the cytoplasm. The catalysed reaction is 7-aminomethyl-7-carbaguanine + 2 NADP(+) = 7-cyano-7-deazaguanine + 2 NADPH + 3 H(+). Its pathway is tRNA modification; tRNA-queuosine biosynthesis. Functionally, catalyzes the NADPH-dependent reduction of 7-cyano-7-deazaguanine (preQ0) to 7-aminomethyl-7-deazaguanine (preQ1). This chain is NADPH-dependent 7-cyano-7-deazaguanine reductase, found in Shewanella denitrificans (strain OS217 / ATCC BAA-1090 / DSM 15013).